The chain runs to 1434 residues: Probable ATP-dependent RNA helicase spindle-E (1434 aa).

In terms of domain architecture, Helicase ATP-binding spans 125–292; it reads LAAINAHPVI…FATTNSIPPV (168 aa). An ATP-binding site is contributed by 138–145; the sequence is GETGCGKT. The DEAH box signature appears at 238–241; that stretch reads DEVH. Positions 339 to 526 constitute a Helicase C-terminal domain; sequence KIIVIIDNME…NSVLKAKVLN (188 aa). The 64-residue stretch at 938–1001 folds into the Tudor domain; it reads AGDITKGMMV…RLMPRELTEQ (64 aa).

This sequence belongs to the DEAD box helicase family. DEAH subfamily.

The protein resides in the cytoplasm. It catalyses the reaction ATP + H2O = ADP + phosphate + H(+). Its function is as follows. Probable ATP-binding RNA helicase which plays a central role during spermatogenesis and oogenesis by repressing transposable elements and preventing their mobilization, which is essential for the germline integrity. Acts via the piRNA metabolic process, which mediates the repression of transposable elements during meiosis by forming complexes composed of piRNAs and Piwi and govern the methylation and subsequent repression of transposons. Involved in the repression of LTR retrotransposon copia. Also involved in telomere regulation by repressing specialized telomeric retroelements HeT-A, TAHRE, and TART; Drosophila telomeres being maintained by transposition of specialized telomeric retroelements. Involved in telomeric trans-silencing, a repression mechanism by which a transposon or a transgene inserted in subtelomeric heterochromatin has the capacity to repress in trans in the female germline, a homologous transposon, or transgene located in euchromatin. Involved in the repression of testis-expressed Stellate genes by the homologous Su(Ste) repeats. Required for anteroposterior and dorsoventral axis formation during oogenesis. This chain is Probable ATP-dependent RNA helicase spindle-E (spn-E), found in Drosophila sechellia (Fruit fly).